Here is a 63-residue protein sequence, read N- to C-terminus: Arabinogalactan protein 22 (63 aa).

The first 27 residues, 1–27 (MASLKFPLEILAVFVIISVILLPIAQS), serve as a signal peptide directing secretion. 3 positions are modified to 4-hydroxyproline: proline 32, proline 34, and proline 36. Residues proline 32, proline 34, and proline 36 are each glycosylated (O-linked (Ara...) hydroxyproline). Serine 38 is lipidated: GPI-anchor amidated serine. The propeptide at 39–63 (DGTSIDQGIAYVLMMVALALTYFIH) is removed in mature form.

Belongs to the AG-peptide AGP family. Post-translationally, contains 4-hydroxyproline; hydroxylated on Pro-32, Pro-34 and Pro-36. In terms of processing, O-glycosylated on hydroxyprolines; noncontiguous hydroxylproline residues are glycosylated with arabinogalactan.

It localises to the cell membrane. Its function is as follows. Proteoglycan that seems to be implicated in diverse developmental roles such as differentiation, cell-cell recognition, embryogenesis and programmed cell death. In Arabidopsis thaliana (Mouse-ear cress), this protein is Arabinogalactan protein 22.